A 94-amino-acid chain; its full sequence is Small ribosomal subunit protein bS16 (94 aa).

It belongs to the bacterial ribosomal protein bS16 family.

In Thermosipho africanus (strain TCF52B), this protein is Small ribosomal subunit protein bS16.